The sequence spans 225 residues: 2-C-methyl-D-erythritol 4-phosphate cytidylyltransferase (225 aa).

This sequence belongs to the IspD/TarI cytidylyltransferase family. IspD subfamily.

The enzyme catalyses 2-C-methyl-D-erythritol 4-phosphate + CTP + H(+) = 4-CDP-2-C-methyl-D-erythritol + diphosphate. It participates in isoprenoid biosynthesis; isopentenyl diphosphate biosynthesis via DXP pathway; isopentenyl diphosphate from 1-deoxy-D-xylulose 5-phosphate: step 2/6. Functionally, catalyzes the formation of 4-diphosphocytidyl-2-C-methyl-D-erythritol from CTP and 2-C-methyl-D-erythritol 4-phosphate (MEP). The polypeptide is 2-C-methyl-D-erythritol 4-phosphate cytidylyltransferase (Prochlorococcus marinus (strain MIT 9313)).